The chain runs to 753 residues: 5-methyltetrahydropteroyltriglutamate--homocysteine methyltransferase (753 aa).

Residues 17–20 and lysine 117 contribute to the 5-methyltetrahydropteroyltri-L-glutamate site; that span reads RELK. Residues 431 to 433 and glutamate 484 contribute to the L-homocysteine site; that span reads IGS. Residues 431–433 and glutamate 484 each bind L-methionine; that span reads IGS. Residues 515 to 516 and tryptophan 561 contribute to the 5-methyltetrahydropteroyltri-L-glutamate site; that span reads RC. Position 599 (aspartate 599) interacts with L-homocysteine. Aspartate 599 serves as a coordination point for L-methionine. Glutamate 605 contacts 5-methyltetrahydropteroyltri-L-glutamate. Zn(2+) contacts are provided by histidine 641, cysteine 643, and glutamate 665. The Proton donor role is filled by histidine 694. Cysteine 726 lines the Zn(2+) pocket.

This sequence belongs to the vitamin-B12 independent methionine synthase family. Zn(2+) serves as cofactor.

The enzyme catalyses 5-methyltetrahydropteroyltri-L-glutamate + L-homocysteine = tetrahydropteroyltri-L-glutamate + L-methionine. It participates in amino-acid biosynthesis; L-methionine biosynthesis via de novo pathway; L-methionine from L-homocysteine (MetE route): step 1/1. In terms of biological role, catalyzes the transfer of a methyl group from 5-methyltetrahydrofolate to homocysteine resulting in methionine formation. The protein is 5-methyltetrahydropteroyltriglutamate--homocysteine methyltransferase of Shigella boydii serotype 4 (strain Sb227).